A 340-amino-acid chain; its full sequence is Protein RecA (340 aa).

ATP is bound at residue 65-72; sequence GPESGGKT.

Belongs to the RecA family.

Its subcellular location is the cytoplasm. Functionally, can catalyze the hydrolysis of ATP in the presence of single-stranded DNA, the ATP-dependent uptake of single-stranded DNA by duplex DNA, and the ATP-dependent hybridization of homologous single-stranded DNAs. It interacts with LexA causing its activation and leading to its autocatalytic cleavage. The chain is Protein RecA from Thermus thermophilus (strain ATCC 27634 / DSM 579 / HB8).